The sequence spans 149 residues: Transcriptional repressor NrdR (149 aa).

Residues C3–C34 fold into a zinc finger. The 91-residue stretch at I49–T139 folds into the ATP-cone domain.

This sequence belongs to the NrdR family. It depends on Zn(2+) as a cofactor.

Functionally, negatively regulates transcription of bacterial ribonucleotide reductase nrd genes and operons by binding to NrdR-boxes. In Clostridium perfringens (strain SM101 / Type A), this protein is Transcriptional repressor NrdR.